The sequence spans 675 residues: Transketolase, chloroplastic (675 aa).

Residues His-78 and 127-129 (GPL) contribute to the thiamine diphosphate site. Asp-168 lines the Mg(2+) pocket. Thiamine diphosphate contacts are provided by Gly-169, Glu-173, and Asn-198. 2 residues coordinate Mg(2+): Asn-198 and Ile-200. Residue His-275 participates in thiamine diphosphate binding. Substrate-binding residues include His-275, Arg-369, and Ser-396. Thiamine diphosphate contacts are provided by residues Glu-423 and 450-453 (FTDY). Glu-423 acts as the Proton donor in catalysis. The substrate site is built by His-474, Asp-482, and Arg-533.

In terms of assembly, homodimer. The cofactor is Mg(2+). Ca(2+) is required as a cofactor. It depends on Mn(2+) as a cofactor. Requires Co(2+) as cofactor. Thiamine diphosphate serves as cofactor.

It localises to the plastid. The protein resides in the chloroplast thylakoid membrane. It carries out the reaction D-sedoheptulose 7-phosphate + D-glyceraldehyde 3-phosphate = aldehydo-D-ribose 5-phosphate + D-xylulose 5-phosphate. Its pathway is carbohydrate biosynthesis; Calvin cycle. Its function is as follows. Catalyzes the reversible transfer of a two-carbon ketol group from fructose-6-phosphate or sedoheptulose-7-phosphate to glyceraldehyde-3-phosphate to yield xylulose-5-phosphate and erythrose-4-phosphate or ribose-5-phosphate, respectively. This Zea mays (Maize) protein is Transketolase, chloroplastic.